A 458-amino-acid polypeptide reads, in one-letter code: Argininosuccinate lyase (458 aa).

Belongs to the lyase 1 family. Argininosuccinate lyase subfamily.

It localises to the cytoplasm. The catalysed reaction is 2-(N(omega)-L-arginino)succinate = fumarate + L-arginine. The protein operates within amino-acid biosynthesis; L-arginine biosynthesis; L-arginine from L-ornithine and carbamoyl phosphate: step 3/3. The sequence is that of Argininosuccinate lyase from Heliobacterium mobile (Heliobacillus mobilis).